The primary structure comprises 1989 residues: Zinc finger C3H1 domain-containing protein (1989 aa).

4 disordered regions span residues 1–133 (MATA…RPSF), 148–218 (GRPY…SKNE), 251–290 (SSKEENVQEDPKTLNFEDQTSTDNVSITKDSSKEVAPEEK), and 310–365 (LPGD…LGED). Position 2 is an N-acetylalanine (A2). 3 positions are modified to phosphoserine: S15, S28, and S34. The span at 20-32 (GELEDGEISDDDN) shows a compositional bias: acidic residues. Residues 33–44 (NSQIRSRSSSSS) show a composition bias toward low complexity. Positions 62–72 (RGGGSGGGGGS) are enriched in gly residues. Low complexity-rich tracts occupy residues 114–132 (PPSVRMPSSSLSESSPRPS), 183–192 (GFSSSQSWRE), and 201–210 (KSFGRSPSRK). Residue S128 is modified to Phosphoserine. Positions 219-259 (NCVEETFEDLLLKYKQIQLELECINKDEKLALSSKEENVQE) form a coiled coil. S251 is modified (phosphoserine). Residues 251–262 (SSKEENVQEDPK) are compositionally biased toward basic and acidic residues. The span at 266 to 279 (FEDQTSTDNVSITK) shows a compositional bias: polar residues. A compositionally biased stretch (basic and acidic residues) spans 280–290 (DSSKEVAPEEK). Residues 330 to 340 (KSDTTDSSQGL) are compositionally biased toward polar residues. A phosphoserine mark is found at S352 and S383. The stretch at 358–389 (SEKKLGEDEEELSELQLRLLALQSASKKWQQK) forms a coiled coil. Disordered regions lie at residues 385–671 (KWQQ…SNLS) and 711–770 (LNDS…PEAL). The span at 392–402 (QVMKESKEKLT) shows a compositional bias: basic and acidic residues. The segment covering 430–440 (ALRKQQTKAWK) has biased composition (basic residues). A coiled-coil region spans residues 432-487 (RKQQTKAWKKLQQQKEQERQKEEDQRKQAEEEERRKREEEIRKIRDLSNQEEQYNR). Composition is skewed to basic and acidic residues over residues 444–479 (QQKEQERQKEEDQRKQAEEEERRKREEEIRKIRDLS) and 501–515 (KSSDPDLRRSLDKQP). Acidic residues predominate over residues 527 to 537 (NYEEVAMDTDS). Residues 574–583 (VSSLPPLSQP) show a composition bias toward low complexity. Over residues 594–616 (PLPPLPPLPPLPPEDPEQPPKPP) the composition is skewed to pro residues. The segment covering 647–671 (TSSNSDPPSPPVLNNSHPVPRSNLS) has biased composition (polar residues). Residues S662, S714, S717, and S719 each carry the phosphoserine modification. Over residues 755–770 (PKSEKENDPLRTPEAL) the composition is skewed to basic and acidic residues. T766 carries the post-translational modification Phosphothreonine. Residues S805 and S809 each carry the phosphoserine modification. A coiled-coil region spans residues 847–909 (LKNLVQQEAK…QQRVTIKKAL (63 aa)). Phosphoserine occurs at positions 948, 949, and 953. The stretch at 965–989 (EKRRLQKLEYEYALKIQKLKEARAL) forms a coiled coil. 2 positions are modified to phosphoserine: S998 and S1046. A C3H1-type zinc finger spans residues 1185 to 1206 (FCRFDLTGTCNDDDCQWQHIQD). Phosphoserine is present on residues S1301, S1303, and S1304. TPR repeat units lie at residues 1361-1400 (VQLWLKLAYKYLNQNEGECSESLDSALNVLARALENNKDN), 1401-1434 (PEIWCHYLRLFSKRGTKDEVQEMCETAVEYAPDY), 1438-1471 (WTFLHLESTFEEKDYVCERMLEFLMGAAKQETSN), 1478-1511 (LEALLFRVQLHIFTGRCQSALAILQNALKSANDG), 1602-1635 (LPLYTNMIALHQLLERYEAAMELCKSLLESCPIN), 1636-1669 (CQLLEALVALYLQTNQHDKARAVWLTAFEKNPQN), and 1745-1778 (PYLWLIYCLCHPLQSSIKETVEAYEAALGVAMRC).

Component of the poly(A) tail exosome targeting (PAXT) complex made of accessory factors, such as PABPN1, ZFC3H1 and MTREX, and which directs a subset of long and polyadenylated poly(A) RNAs for exosomal degradation. Co-localizes with component of the CBC-ARS2 (CBCA) complex. Binds to RNA exosome components. Interacts with NCBP1/CBP80, ZC3H18, MTREX and PABPN1 in a RNase-insensitive manner, and with PABPC4, PABPC1 and ZC3H14 in a RNase-sensitive manner.

The protein localises to the nucleus. Functionally, subunit of the trimeric poly(A) tail exosome targeting (PAXT) complex, a complex that directs a subset of long and polyadenylated poly(A) RNAs for exosomal degradation. The RNA exosome is fundamental for the degradation of RNA in eukaryotic nuclei. Substrate targeting is facilitated by its cofactor MTREX, which links to RNA-binding protein adapters. This Homo sapiens (Human) protein is Zinc finger C3H1 domain-containing protein (ZFC3H1).